A 398-amino-acid polypeptide reads, in one-letter code: Alpha-(1,3)-fucosyltransferase 4 (398 aa).

The Cytoplasmic portion of the chain corresponds to 1 to 15 (MRARWGRRGARRGGP). The chain crosses the membrane as a helical; Signal-anchor for type II membrane protein span at residues 16–40 (GLPGTHLALLAASLLSSSVAIYVCW). Residues 41-398 (KQLPPLPWAS…VPNLAGWFQQ (358 aa)) lie on the Lumenal side of the membrane. Residues N84, N183, and N311 are each glycosylated (N-linked (GlcNAc...) asparagine).

The protein belongs to the glycosyltransferase 10 family.

Its subcellular location is the golgi apparatus. It localises to the golgi stack membrane. It carries out the reaction a beta-D-galactosyl-(1-&gt;4)-N-acetyl-beta-D-glucosaminyl derivative + GDP-beta-L-fucose = a beta-D-galactosyl-(1-&gt;4)-[alpha-L-fucosyl-(1-&gt;3)]-N-acetyl-beta-D-glucosaminyl derivative + GDP + H(+). The enzyme catalyses an N-acetyl-alpha-neuraminyl-(2-&gt;3)-beta-D-galactosyl-(1-&gt;4)-N-acetyl-beta-D-glucosaminyl derivative + GDP-beta-L-fucose = an alpha-Neu5Ac-(2-&gt;3)-beta-D-Gal-(1-&gt;4)-[alpha-L-Fuc-(1-&gt;3)]-beta-D-GlcNAc derivative + GDP + H(+). It catalyses the reaction an alpha-Neu5Ac-(2-&gt;3)-beta-D-Gal-(1-&gt;4)-beta-D-GlcNAc-(1-&gt;3)-beta-D-Gal-(1-&gt;4)-beta-D-GlcNAc derivative + GDP-beta-L-fucose = an alpha-Neu5Ac-(2-&gt;3)-beta-D-Gal-(1-&gt;4)-beta-D-GlcNAc-(1-&gt;3)-beta-D-Gal-(1-&gt;4)-[alpha-L-Fuc-(1-&gt;3)]-beta-D-GlcNAc derivative + GDP + H(+). The catalysed reaction is an alpha-Neu5Ac-(2-&gt;3)-beta-D-Gal-(1-&gt;4)-beta-D-GlcNAc6S derivative + GDP-beta-L-fucose = an alpha-Neu5Ac-(2-&gt;3)-beta-D-Gal-(1-&gt;4)-[alpha-L-Fuc-(1-&gt;3)]-beta-D-GlcNAc6S derivative + GDP + H(+). It functions in the pathway protein modification; protein glycosylation. Catalyzes alpha(1-&gt;3) linkage of fucosyl moiety transferred from GDP-beta-L-fucose to N-acetyl glucosamine (GlcNAc) within type 2 lactosamine (LacNAc, Gal-beta(1-&gt;4)GlcNAc) glycan attached to N- or O-linked glycoproteins. Robustly fucosylates nonsialylated distal LacNAc unit of the polylactosamine chain to form Lewis X antigen (CD15), a glycan determinant known to mediate important cellular functions in development and immunity. Fucosylates with lower efficiency sialylated LacNAc acceptors to form sialyl Lewis X and 6-sulfo sialyl Lewis X determinants that serve as recognition epitopes for C-type lectins. Together with FUT7 contributes to SELE, SELL and SELP selectin ligand biosynthesis and selectin-dependent lymphocyte homing, leukocyte migration and blood leukocyte homeostasis. In a cell type specific manner, may also fucosylate the internal LacNAc unit of the polylactosamine chain to form VIM-2 antigen that serves as recognition epitope for SELE. In Bos taurus (Bovine), this protein is Alpha-(1,3)-fucosyltransferase 4 (FUT4).